The sequence spans 427 residues: Histidine--tRNA ligase (427 aa).

Belongs to the class-II aminoacyl-tRNA synthetase family. As to quaternary structure, homodimer.

It localises to the cytoplasm. It catalyses the reaction tRNA(His) + L-histidine + ATP = L-histidyl-tRNA(His) + AMP + diphosphate + H(+). The protein is Histidine--tRNA ligase of Streptococcus suis (strain 98HAH33).